A 414-amino-acid chain; its full sequence is GA-binding protein subunit beta-2 (414 aa).

5 ANK repeats span residues 5 to 34 (DLGKRLLEAARKGQDDEVRTLMANGAPFTT), 37 to 66 (LGTSPLHLAAQYGHYSTAEVLLRAGVSRDA), 70 to 99 (VDRTPLHMAAADGHVHIVELLVRSGADVNA), 103 to 132 (LQMTALHWATEHHHRDVVELLIKYGADVYA), and 136 to 166 (FDKSAFDIAMEKNNTEILVMLQEAMQNQVNT). At Ser218 the chain carries Phosphoserine. Residues 310-362 (EEMKEGSERELLQQQLQEANRRAQEYRHQLLKKEQEAEQYRLRLEAMAQQQTN) adopt a coiled-coil conformation.

Heterotetramer of two alpha and two beta subunits. The C-terminal is necessary for the formation of a heterotetrameric GABP-alpha-2/beta-2 complex, and also facilitates homotypic dimerization. Interacts with ADGRB2. In terms of tissue distribution, high levels in thymus, spleen, kidney and intestine.

It is found in the nucleus. Functionally, transcription factor capable of interacting with purine rich repeats (GA repeats). Must associate with GABP-alpha to bind DNA. The protein is GA-binding protein subunit beta-2 (Gabpb2) of Mus musculus (Mouse).